The sequence spans 244 residues: Orotidine 5'-phosphate decarboxylase (244 aa).

Substrate-binding positions include Asp-18, Lys-43, 73–82, Ser-130, 182–192, Gly-206, and Arg-207; these read DLKLADIGYI and PGVGAQGGKPG. Lys-75 (proton donor) is an active-site residue.

It belongs to the OMP decarboxylase family. Type 1 subfamily. Homodimer.

The catalysed reaction is orotidine 5'-phosphate + H(+) = UMP + CO2. The protein operates within pyrimidine metabolism; UMP biosynthesis via de novo pathway; UMP from orotate: step 2/2. In terms of biological role, catalyzes the decarboxylation of orotidine 5'-monophosphate (OMP) to uridine 5'-monophosphate (UMP). In Aeropyrum pernix (strain ATCC 700893 / DSM 11879 / JCM 9820 / NBRC 100138 / K1), this protein is Orotidine 5'-phosphate decarboxylase.